Here is a 42-residue protein sequence, read N- to C-terminus: Potassium channel toxin gamma-KTx 1.8 (42 aa).

4 disulfides stabilise this stretch: cysteine 5–cysteine 23, cysteine 11–cysteine 34, cysteine 20–cysteine 39, and cysteine 24–cysteine 41.

Belongs to the ergtoxin family. Gamma-KTx 1 subfamily. As to expression, expressed by the venom gland.

It localises to the secreted. Its function is as follows. Blocks in a reversible manner human and rat Kv11.1/KCNH2/ERG1 potassium channels. Also completely and irreversibly blocks rat Kv11.2/KCNH6/ERG2 and human Kv11.3/KCNH7/ERG3 channels. Also weakly inhibits Kir2.1/KCNJ2 and Kv1.2/KCNA2 potassium channels. This is Potassium channel toxin gamma-KTx 1.8 from Centruroides elegans (Bark scorpion).